The sequence spans 1036 residues: MESWLGRLWLCMMLLLPLPQPCQDQELFGPSHQLPSEEGQVPEGLWGPWGRWASCSQPCGVGVQRRSRTCELHPALPLPPRPPRHPEAHRPRGQGSRPQTPRDPQSLYRPQPRGRGGPLRAPASQVGREETQEPQGAQRFRVRDPIKPGMFGYGRVPFALPLHRSRRHPHRPGQPKNSSTGEGMVPSQPPSTELASEKHGPHMQPPEPRSHSAETPRSGTAQTEVLPRTSSAPSYTGTPAPTSSFGDSRSFQGSLGPRMPPSPGSWSSPQGAERRHPPPFSPVPRSQQSRRHWRPPGPHRSPDGWLPLTRDSSPLWSIFAPSIPAPNCSGESEQMRACSQEPCPPEQPDPRALQCAAFDSQEFMGQLYQWEPFTEVQGSQRCELNCRPRGFRFYVRHTEKVQDGTLCQPGSLDICVAGRCLSPGCDGVLGSGRRPDGCGVCGGDGSTCRLVSGNLTDRGGPLGYQKILWIPAGASHLHISQLRPSSNYLALRGPGGRSIINGNWAVDPPGSYTAIGTVFQYNRPPREEGKGESLSAEGPTTQPVDVYMIFQEDNPGVFYQYVISSPPAVLESPSTKPPALQPQPEMLRGEPLLPSAPRPVRAPGTLQRQVRIPQVPPPTRVRTAMGSSAGYWKQVGHSECSASCGKGVWHPIFLCISRESGEELDEQSCAVGARPPASPEPCHGPPCPPYWEAGEWTSCSRSCGPGTQHRQLLCRQEFGGGGSSVPPERCGHLPRPNITQPCQLHLCGHWEISSPWSQCSVRCGRGQRSRQVRCVGSNGDEVDKQECASGPPPPPSREACDMGPCTTAWFYSDWSSKCSAECGTGIQRRAVVCLRSGETLQGDPEAGSTEQGCPLRSRPPDMRACSLGPCERTWRWFTGPWSECSSECGSGTQHRDIICVSKLGAEFNVTSPSNCSHLPRPPALQPCQGQACEDKWFSTLWSPCSRSCQGGMQTREVQCLSGNQTLSSRCPPHLRPSRKRPCNSQPCNQRPDDQCKDSSPHCPLVVQARLCVYPYYTTTCCRSCAHVLEQSQLEPA.

The N-terminal stretch at 1-24 (MESWLGRLWLCMMLLLPLPQPCQD) is a signal peptide. The TSP type-1 1 domain occupies 47–91 (GPWGRWASCSQPCGVGVQRRSRTCELHPALPLPPRPPRHPEAHRP). Disordered stretches follow at residues 73 to 149 (HPAL…IKPG) and 163 to 308 (HRSR…WLPL). Over residues 163–173 (HRSRRHPHRPG) the composition is skewed to basic residues. Polar residues predominate over residues 215 to 253 (TPRSGTAQTEVLPRTSSAPSYTGTPAPTSSFGDSRSFQG). N-linked (GlcNAc...) asparagine glycosylation is found at asparagine 454 and asparagine 737. 5 TSP type-1 domains span residues 687-748 (CPPY…HLCG), 750-804 (WEIS…DMGP), 805-871 (CTTA…GPCE), 872-931 (RTWR…QGQA), and 932-988 (CEDK…QPCN). Residues 991-1028 (PDDQCKDSSPHCPLVVQARLCVYPYYTTTCCRSCAHVL) enclose the PLAC domain.

Interacts with CTSB. Interacts with FBN1. Post-translationally, glycosylated. Can be O-fucosylated by POFUT2 on a serine or a threonine residue found within the consensus sequence C1-X(2)-(S/T)-C2-G of the TSP type-1 repeat domains where C1 and C2 are the first and second cysteine residue of the repeat, respectively. Fucosylated repeats can then be further glycosylated by the addition of a beta-1,3-glucose residue by the glucosyltransferase, B3GALTL. Fucosylation mediates the efficient secretion of ADAMTS family members. Can also be C-glycosylated with one or two mannose molecules on tryptophan residues within the consensus sequence W-X-X-W of the TPRs, and N-glycosylated. These other glycosylations can also facilitate secretion. Widely expressed in a range of tissues. Especially prevalent in brain, spinal cord, muscle, lung and heart.

It localises to the secreted. It is found in the extracellular space. The protein localises to the extracellular matrix. Functionally, positive regulation of apoptosis. May facilitate FBN1 microfibril biogenesis. This is ADAMTS-like protein 4 from Mus musculus (Mouse).